The sequence spans 206 residues: Small ribosomal subunit protein uS4 (206 aa).

The S4 RNA-binding domain occupies 96 to 156; that stretch reads GRLDNVVYRM…EKAKKQARIK (61 aa).

It belongs to the universal ribosomal protein uS4 family. As to quaternary structure, part of the 30S ribosomal subunit. Contacts protein S5. The interaction surface between S4 and S5 is involved in control of translational fidelity.

Functionally, one of the primary rRNA binding proteins, it binds directly to 16S rRNA where it nucleates assembly of the body of the 30S subunit. In terms of biological role, with S5 and S12 plays an important role in translational accuracy. The polypeptide is Small ribosomal subunit protein uS4 (Aeromonas hydrophila subsp. hydrophila (strain ATCC 7966 / DSM 30187 / BCRC 13018 / CCUG 14551 / JCM 1027 / KCTC 2358 / NCIMB 9240 / NCTC 8049)).